The chain runs to 281 residues: Ornithine lipid ester-linked acyl 2-hydroxylase (281 aa).

A compositionally biased stretch (polar residues) spans 1 to 24 (MTESPLSAPAPTSNQSPAPEQTFG). Residues 1-29 (MTESPLSAPAPTSNQSPAPEQTFGTAGIA) form a disordered region.

Belongs to the aspartyl/asparaginyl beta-hydroxylase family.

It carries out the reaction an N(2)-[(3R)-3-(2-saturated-acyloxy)acyl]-L-ornithine lipid + 2-oxoglutarate + O2 = a 2-hydroxyornithine lipid + succinate + CO2. Its pathway is lipid metabolism. Its function is as follows. Involved in the biosynthesis of ornithine lipids (OLs), which are phosphorus-free membrane lipids. Catalyzes the hydroxylation at the 2 position of the secondary fatty acid of OL. Contributes to symbiotic performance and acid tolerance. The protein is Ornithine lipid ester-linked acyl 2-hydroxylase of Rhizobium tropici.